Here is a 425-residue protein sequence, read N- to C-terminus: Arogenate dehydratase 5, chloroplastic (425 aa).

The transit peptide at 1–38 directs the protein to the chloroplast; it reads MQTISPAFSCDLKSVIQPNLTAKKARYSHVNGKRVSVR. The region spanning 127–304 is the Prephenate dehydratase domain; it reads RVAYQGVPGA…NVTRFLMLAR (178 aa). Residues 320–411 enclose the ACT domain; the sequence is VFAAQEHKGT…SFLRVLGSYP (92 aa).

Expressed in roots, leaves, stems, flowers and siliques. More abundant in stems and roots.

The protein localises to the plastid. The protein resides in the chloroplast stroma. The catalysed reaction is L-arogenate + H(+) = L-phenylalanine + CO2 + H2O. It participates in amino-acid biosynthesis; L-phenylalanine biosynthesis; L-phenylalanine from L-arogenate: step 1/1. Its function is as follows. Converts the prephenate produced from the shikimate-chorismate pathway into phenylalanine. This is Arogenate dehydratase 5, chloroplastic from Arabidopsis thaliana (Mouse-ear cress).